A 418-amino-acid polypeptide reads, in one-letter code: Tyrosine--tRNA ligase 1 (418 aa).

Y34 is a binding site for L-tyrosine. The 'HIGH' region motif lies at P39–H48. L-tyrosine contacts are provided by Y169 and Q173. The 'KMSKS' region signature appears at K230–T234. K233 lines the ATP pocket. The S4 RNA-binding domain maps to T352–Y418.

It belongs to the class-I aminoacyl-tRNA synthetase family. TyrS type 1 subfamily. As to quaternary structure, homodimer.

The protein localises to the cytoplasm. The enzyme catalyses tRNA(Tyr) + L-tyrosine + ATP = L-tyrosyl-tRNA(Tyr) + AMP + diphosphate + H(+). Functionally, catalyzes the attachment of tyrosine to tRNA(Tyr) in a two-step reaction: tyrosine is first activated by ATP to form Tyr-AMP and then transferred to the acceptor end of tRNA(Tyr). The protein is Tyrosine--tRNA ligase 1 of Bacillus anthracis.